The primary structure comprises 158 residues: 6,7-dimethyl-8-ribityllumazine synthase (158 aa).

5-amino-6-(D-ribitylamino)uracil is bound by residues Phe-23, 61–63 (SFE), and 85–87 (AVI). 90–91 (ET) lines the (2S)-2-hydroxy-3-oxobutyl phosphate pocket. The Proton donor role is filled by His-93. Phe-118 serves as a coordination point for 5-amino-6-(D-ribitylamino)uracil. Residue Arg-132 coordinates (2S)-2-hydroxy-3-oxobutyl phosphate.

This sequence belongs to the DMRL synthase family.

It catalyses the reaction (2S)-2-hydroxy-3-oxobutyl phosphate + 5-amino-6-(D-ribitylamino)uracil = 6,7-dimethyl-8-(1-D-ribityl)lumazine + phosphate + 2 H2O + H(+). It participates in cofactor biosynthesis; riboflavin biosynthesis; riboflavin from 2-hydroxy-3-oxobutyl phosphate and 5-amino-6-(D-ribitylamino)uracil: step 1/2. Functionally, catalyzes the formation of 6,7-dimethyl-8-ribityllumazine by condensation of 5-amino-6-(D-ribitylamino)uracil with 3,4-dihydroxy-2-butanone 4-phosphate. This is the penultimate step in the biosynthesis of riboflavin. The chain is 6,7-dimethyl-8-ribityllumazine synthase from Prochlorococcus marinus (strain MIT 9515).